Reading from the N-terminus, the 104-residue chain is Large ribosomal subunit protein bL21 (104 aa).

This sequence belongs to the bacterial ribosomal protein bL21 family. Part of the 50S ribosomal subunit. Contacts protein L20.

Functionally, this protein binds to 23S rRNA in the presence of protein L20. This Kosmotoga olearia (strain ATCC BAA-1733 / DSM 21960 / TBF 19.5.1) protein is Large ribosomal subunit protein bL21.